A 170-amino-acid polypeptide reads, in one-letter code: MGNETSLPMDMCSNFDADEIRRLGKRFRKLDLDNSGALSIDEFMSLPELQQNPLVQRVIDIFDADGNGEVDFKEFIQGVSQFSVRGDKLSKLRFAFRIYDMDNDGYISNGELFQVLKMMVGNNLKDTQLQQIVDKTICFADKDEDGKISFDEFCSVVGNTDIHKKMVVDV.

4 EF-hand domains span residues 18 to 46 (DEIR…FMSL), 50 to 85 (QQNP…FSVR), 87 to 122 (DKLS…MVGN), and 128 to 163 (QLQQ…TDIH). Asp-31, Asp-33, Ser-35, Glu-42, Asp-63, Asp-65, Asn-67, Glu-69, Glu-74, Asp-100, Asp-102, Asp-104, Tyr-106, Glu-111, Asp-141, Asp-143, Asp-145, Lys-147, and Glu-152 together coordinate Ca(2+).

This sequence belongs to the calcineurin regulatory subunit family. As to quaternary structure, composed of two components (A and B), the A component is the catalytic subunit and the B component confers calcium sensitivity.

In terms of biological role, calcineurin is a calcium-binding and calmodulin-binding protein found in all cells from yeast to mammals, and a calcium-dependent, calmodulin-stimulated protein phosphatase. This Drosophila melanogaster (Fruit fly) protein is Calcineurin subunit B type 1 (CanB).